The primary structure comprises 34 residues: Omega/M-ectatotoxin-Et1a subunit B (34 aa).

The cysteines at positions 10 and 32 are disulfide-linked.

It belongs to the ectatomin family. Ectatomin-Et subfamily. As to quaternary structure, heterodimer of an A and a B chain; disulfide-linked. As to expression, expressed by the venom gland.

It localises to the secreted. The protein localises to the target cell membrane. Functionally, algogenic for animals, human and insects. At high concentrations (0.5-1 uM), it acts as a pore-forming protein that forms nonselective cation channels both in cell and artificial membranes. It is weakly selective for cation over anions channel conductance is identical in both directions. At lower concentrations (1-10 nM), this heterodimer inhibits cardiac L-type calcium currents in isolated rat cardiac ventricular myocytes. This Ectatomma tuberculatum (Selva ant) protein is Omega/M-ectatotoxin-Et1a subunit B.